Consider the following 378-residue polypeptide: tRNA (guanine(26)-N(2))-dimethyltransferase (378 aa).

A Trm1 methyltransferase domain is found at 4-374 (KEVTEGKVRI…KGYEEIIRCV (371 aa)). Positions 44, 69, 87, 114, and 115 each coordinate S-adenosyl-L-methionine. Zn(2+) is bound by residues Cys-246, Cys-249, Cys-263, and Cys-266.

This sequence belongs to the class I-like SAM-binding methyltransferase superfamily. Trm1 family.

It carries out the reaction guanosine(26) in tRNA + 2 S-adenosyl-L-methionine = N(2)-dimethylguanosine(26) in tRNA + 2 S-adenosyl-L-homocysteine + 2 H(+). Functionally, dimethylates a single guanine residue at position 26 of a number of tRNAs using S-adenosyl-L-methionine as donor of the methyl groups. The protein is tRNA (guanine(26)-N(2))-dimethyltransferase of Saccharolobus islandicus (strain M.14.25 / Kamchatka #1) (Sulfolobus islandicus).